The primary structure comprises 593 residues: MRTDYCGAINTRHLDKTITLCGWVHRRRDHGGVIFIDLRDREGIVQIVCDPDNVAAFQIAEKIRSEFVLAITGTVRHRPEGTVNHGILSGEIEVLVNAIEILNPSLTPPFQMDDDNLSEAIRLEYRYLDLRRPVMQRNIRLRHQVTMAVRIFLDQHGFIDVETPMLTKSTPEGARDYLVPSRVNAGHFFALPQSPQLFKQLLMVSGFDRYYQITRCFRDEDLRADRQPEFTQIDIETSFLPENEIMGMMEDMIRRLFASVLDISLPDPFPRLSYADAMFLYGSDKPDLRVPLVLTELTDLMQDVPFQVFRDAAQKAGGRVAALRVPGGGELSRKEIDEYTQFVGIYGAKGLAYIKINDLTKGIEGLQSPILKFLPESVVQSILERTQAQNGDLVFFGADKAKVVNDALGALRVKIGHERNLATDSWQPLWVVDFPMFEWDEEEKRWQALHHPFTSPSQGHEDFLTSDPGKALSRAYDMVLNGMEIGGGSIRIHRQDIQSKVFQALNISDDEAKLKFGFLLDALQYGAPPHGGIAFGLDRIVAMMTGADSIRDVIAFPKTQRAQCLLTQAPGAVEEKQLRELHIRLRRTENTNN.

E172 is a binding site for L-aspartate. The segment at 196–199 is aspartate; that stretch reads QLFK. L-aspartate is bound at residue R218. ATP contacts are provided by residues 218–220 and Q227; that span reads RDE. Residue H450 participates in L-aspartate binding. E484 serves as a coordination point for ATP. L-aspartate is bound at residue R491. ATP is bound at residue 536–539; sequence GLDR.

It belongs to the class-II aminoacyl-tRNA synthetase family. Type 1 subfamily. As to quaternary structure, homodimer.

Its subcellular location is the cytoplasm. The enzyme catalyses tRNA(Asx) + L-aspartate + ATP = L-aspartyl-tRNA(Asx) + AMP + diphosphate. Its function is as follows. Aspartyl-tRNA synthetase with relaxed tRNA specificity since it is able to aspartylate not only its cognate tRNA(Asp) but also tRNA(Asn). Reaction proceeds in two steps: L-aspartate is first activated by ATP to form Asp-AMP and then transferred to the acceptor end of tRNA(Asp/Asn). The protein is Aspartate--tRNA(Asp/Asn) ligase of Nitrosomonas europaea (strain ATCC 19718 / CIP 103999 / KCTC 2705 / NBRC 14298).